Consider the following 399-residue polypeptide: Glycerol-1-phosphate dehydrogenase [NAD(P)+] (399 aa).

NAD(+)-binding positions include Asp-56, 118–122 (GTIHD), and 140–143 (TAPS). Asp-145 lines the substrate pocket. Position 149 (Ser-149) interacts with NAD(+). A substrate-binding site is contributed by Asp-192. Residues Asp-192 and His-272 each contribute to the Ni(2+) site. His-276 serves as a coordination point for substrate. His-292 contacts Ni(2+).

It belongs to the glycerol-1-phosphate dehydrogenase family. Homodimer. Requires Ni(2+) as cofactor.

It is found in the cytoplasm. It carries out the reaction sn-glycerol 1-phosphate + NAD(+) = dihydroxyacetone phosphate + NADH + H(+). The catalysed reaction is sn-glycerol 1-phosphate + NADP(+) = dihydroxyacetone phosphate + NADPH + H(+). Its function is as follows. Catalyzes the NAD(P)H-dependent reduction of dihydroxyacetonephosphate (DHAP or glycerone phosphate) to glycerol 1-phosphate (G1P). The G1P thus generated is probably used for the synthesis of phosphoglycerolipids in Gram-positive bacterial species. In Halalkalibacterium halodurans (strain ATCC BAA-125 / DSM 18197 / FERM 7344 / JCM 9153 / C-125) (Bacillus halodurans), this protein is Glycerol-1-phosphate dehydrogenase [NAD(P)+].